Consider the following 237-residue polypeptide: Proteasome subunit beta 2 (237 aa).

Over residues 1-14 (MNNWSQGSTPQGSD) the composition is skewed to polar residues. Residues 1–42 (MNNWSQGSTPQGSDPSPYAPELGSLPDGSQSDDHGDTVNKTG) constitute a propeptide, removed in mature form; by autocatalysis. The disordered stretch occupies residues 1 to 45 (MNNWSQGSTPQGSDPSPYAPELGSLPDGSQSDDHGDTVNKTGTTT). Catalysis depends on threonine 43, which acts as the Nucleophile.

Belongs to the peptidase T1B family. In terms of assembly, the 20S proteasome core is composed of 14 alpha and 14 beta subunits that assemble into four stacked heptameric rings, resulting in a barrel-shaped structure. The two inner rings, each composed of seven catalytic beta subunits, are sandwiched by two outer rings, each composed of seven alpha subunits. The catalytic chamber with the active sites is on the inside of the barrel. Has a gated structure, the ends of the cylinder being occluded by the N-termini of the alpha-subunits. Is capped at one or both ends by the proteasome regulatory ATPase, PAN.

It is found in the cytoplasm. It carries out the reaction Cleavage of peptide bonds with very broad specificity.. With respect to regulation, the formation of the proteasomal ATPase PAN-20S proteasome complex, via the docking of the C-termini of PAN into the intersubunit pockets in the alpha-rings, triggers opening of the gate for substrate entry. Interconversion between the open-gate and close-gate conformations leads to a dynamic regulation of the 20S proteasome proteolysis activity. Its function is as follows. Component of the proteasome core, a large protease complex with broad specificity involved in protein degradation. This is Proteasome subunit beta 2 from Haloterrigena turkmenica (strain ATCC 51198 / DSM 5511 / JCM 9101 / NCIMB 13204 / VKM B-1734 / 4k) (Halococcus turkmenicus).